We begin with the raw amino-acid sequence, 657 residues long: Protein kinase and PP2C-like domain-containing protein (657 aa).

The Protein kinase domain occupies 32–327 (FSLLSPIAKG…LKIIEKHIAV (296 aa)). ATP-binding positions include 38–46 (IAKGSESTV) and Lys-59. The active-site Proton acceptor; for kinase activity is Asp-156. Positions 390 to 647 (SWGSFATCGR…DNITVIVVFL (258 aa)) constitute a PPM-type phosphatase domain. The Mn(2+) site is built by Asp-426, Gly-427, Asp-598, and Asp-638.

It in the N-terminal section; belongs to the protein kinase superfamily. Ser/Thr protein kinase family. In the C-terminal section; belongs to the PP2C family. It depends on Mg(2+) as a cofactor. Requires Mn(2+) as cofactor.

The catalysed reaction is L-seryl-[protein] + ATP = O-phospho-L-seryl-[protein] + ADP + H(+). It catalyses the reaction L-threonyl-[protein] + ATP = O-phospho-L-threonyl-[protein] + ADP + H(+). The enzyme catalyses O-phospho-L-seryl-[protein] + H2O = L-seryl-[protein] + phosphate. It carries out the reaction O-phospho-L-threonyl-[protein] + H2O = L-threonyl-[protein] + phosphate. The chain is Protein kinase and PP2C-like domain-containing protein from Oryza sativa subsp. japonica (Rice).